The following is a 97-amino-acid chain: Citrate lyase acyl carrier protein (97 aa).

Serine 14 bears the O-(phosphoribosyl dephospho-coenzyme A)serine mark.

Belongs to the CitD family. In terms of assembly, oligomer with a subunit composition of (alpha,beta,gamma)6.

It localises to the cytoplasm. Functionally, covalent carrier of the coenzyme of citrate lyase. This Lactobacillus acidophilus (strain ATCC 700396 / NCK56 / N2 / NCFM) protein is Citrate lyase acyl carrier protein.